Reading from the N-terminus, the 407-residue chain is Arginine deiminase (407 aa).

Cys397 functions as the Amidino-cysteine intermediate in the catalytic mechanism.

The protein belongs to the arginine deiminase family.

Its subcellular location is the cytoplasm. It carries out the reaction L-arginine + H2O = L-citrulline + NH4(+). The protein operates within amino-acid degradation; L-arginine degradation via ADI pathway; carbamoyl phosphate from L-arginine: step 1/2. The polypeptide is Arginine deiminase (Vibrio cholerae serotype O1 (strain ATCC 39541 / Classical Ogawa 395 / O395)).